The chain runs to 256 residues: MNNAIFPNKFKVALAAQQVQIGCWSALASPITTEVLGLAGFDWLVLDGEHAPNDVTTLIPQLMALKGSASAPVVRVPTNEPVIIKRMLDIGFYNFLIPFVETQEEAARAVASTRYPPEGIRGVSVSHRANMFGTVPDYFAQSNKNITIIVQIESQLGVDNVDAIAATEGVDGIFVGPSDLAAAMGHLGNASHPDVQQTIQHIFARAKAHGKPCGILAPVEADARRYLEWGATFVAVGSDLGVFRAGTQKLADTFKK.

Histidine 50 functions as the Proton acceptor in the catalytic mechanism. Residue glutamine 151 coordinates substrate. Glutamate 153 contributes to the Mg(2+) binding site. Positions 178 and 179 each coordinate substrate. Aspartate 179 provides a ligand contact to Mg(2+).

It belongs to the HpcH/HpaI aldolase family. KDGluc aldolase subfamily. In terms of assembly, homohexamer; trimer of dimers. Requires Mg(2+) as cofactor.

It carries out the reaction 5-dehydro-4-deoxy-D-glucarate = 2-hydroxy-3-oxopropanoate + pyruvate. It catalyses the reaction 2-dehydro-3-deoxy-D-glucarate = 2-hydroxy-3-oxopropanoate + pyruvate. It participates in carbohydrate acid metabolism; galactarate degradation; D-glycerate from galactarate: step 2/3. Functionally, catalyzes the reversible retro-aldol cleavage of both 5-keto-4-deoxy-D-glucarate and 2-keto-3-deoxy-D-glucarate to pyruvate and tartronic semialdehyde. The protein is 5-keto-4-deoxy-D-glucarate aldolase of Salmonella arizonae (strain ATCC BAA-731 / CDC346-86 / RSK2980).